A 509-amino-acid polypeptide reads, in one-letter code: Probable cytochrome P450 519B1 (509 aa).

Residues 1-21 traverse the membrane as a helical segment; that stretch reads MNLINLILYFILFWIVFDFIR. Cys-456 contacts heme.

Belongs to the cytochrome P450 family. The cofactor is heme.

The protein resides in the membrane. This is Probable cytochrome P450 519B1 (cyp519B1) from Dictyostelium discoideum (Social amoeba).